A 400-amino-acid polypeptide reads, in one-letter code: Tryptophan--tRNA ligase, cytoplasmic (400 aa).

The 'HIGH' region motif lies at 95–104 (PSSGSLHFGH). Positions 281 to 285 (KMSAS) match the 'KMSKS' region motif.

It belongs to the class-I aminoacyl-tRNA synthetase family.

The protein localises to the cytoplasm. The catalysed reaction is tRNA(Trp) + L-tryptophan + ATP = L-tryptophyl-tRNA(Trp) + AMP + diphosphate + H(+). The chain is Tryptophan--tRNA ligase, cytoplasmic (trpS) from Dictyostelium discoideum (Social amoeba).